The chain runs to 362 residues: GDSL esterase/lipase At5g45670 (362 aa).

The N-terminal stretch at 1 to 23 (MARMSLMIMMIMVAVTMINIAKS) is a signal peptide. Serine 36 (nucleophile) is an active-site residue. Catalysis depends on residues aspartate 326 and histidine 329.

The protein belongs to the 'GDSL' lipolytic enzyme family.

The protein localises to the secreted. The chain is GDSL esterase/lipase At5g45670 from Arabidopsis thaliana (Mouse-ear cress).